A 573-amino-acid polypeptide reads, in one-letter code: Glucocorticoid modulatory element-binding protein 1 (573 aa).

N-acetylalanine is present on Ala2. Residues Thr82 to Asp166 enclose the SAND domain. Position 113 (Cys113) interacts with Zn(2+). Lys139, Lys143, Lys146, and Arg157 together coordinate DNA. Positions 170, 174, and 178 each coordinate Zn(2+). Residues Leu321 to Val367 are a coiled coil. A disordered region spans residues Pro370 to Gln398.

In terms of assembly, homodimer, and heterodimer of GMEB1 and GMEB2. GMEB1 and GMEB2 form the parvovirus initiator complex (PIF). Interacts with the glucocorticoid receptor (NR3C1) and NCOA2/TIF2. May interact with HSP27 and CREB-binding protein (CBP).

It localises to the nucleus. The protein resides in the cytoplasm. In terms of biological role, trans-acting factor that binds to glucocorticoid modulatory elements (GME) present in the TAT (tyrosine aminotransferase) promoter and increases sensitivity to low concentrations of glucocorticoids. Also binds to the transferrin receptor promoter. Essential auxiliary factor for the replication of parvoviruses. This chain is Glucocorticoid modulatory element-binding protein 1 (GMEB1), found in Homo sapiens (Human).